The primary structure comprises 200 residues: Small ribosomal subunit protein mS26 (200 aa).

A mitochondrion-targeting transit peptide spans 1 to 27 (MLRALNRLAARPGGQPPTLLLLPVRGR). Lys-159 is modified (N6-acetyllysine).

This sequence belongs to the mitochondrion-specific ribosomal protein mS26 family. Component of the mitochondrial ribosome small subunit (28S) which comprises a 12S rRNA and about 30 distinct proteins.

The protein resides in the mitochondrion. This Rattus norvegicus (Rat) protein is Small ribosomal subunit protein mS26 (Mrps26).